Reading from the N-terminus, the 1203-residue chain is Potassium/sodium hyperpolarization-activated cyclic nucleotide-gated channel 4 (1203 aa).

The tract at residues 1–182 (MDKLPPSMRK…QPASASCEQP (182 aa)) is disordered. At 1–263 (MDKLPPSMRK…IIHPYSDFRF (263 aa)) the chain is on the cytoplasmic side. Over residues 26 to 36 (MDEEEDAEEEG) the composition is skewed to acidic residues. The span at 105-117 (SRGGGSGGTGSGS) shows a compositional bias: gly residues. Residues 121–133 (HLHDSAEERRLIA) are compositionally biased toward basic and acidic residues. Ser-138 carries the post-translational modification Phosphoserine. A compositionally biased stretch (pro residues) spans 163 to 174 (ASPPPPQQPPQP). The segment at 209–260 (GQAGFMQRQFGAMLQPGVNKFSLRMFGSQKAVEREQERVKSAGFWIIHPYSD) is involved in subunit assembly. Residues 264-286 (YWDLTMLLLMVGNLIIIPVGITF) traverse the membrane as a helical segment. At 287–293 (FKDENTT) the chain is on the extracellular side. A helical transmembrane segment spans residues 294-314 (PWIVFNVVSDTFFLIDLVLNF). The Cytoplasmic segment spans residues 315–336 (RTGIVVEDNTEIILDPQRIKMK). Residues 337 to 359 (YLKSWFMVDFISSIPVDYIFLIV) traverse the membrane as a helical segment. The Extracellular portion of the chain corresponds to 360 to 378 (ETRIDSEVYKTARALRIVR). Residues 379–399 (FTKILSLLRLLRLSRLIRYIH) form a helical; Voltage-sensor membrane-spanning segment. Over 400–413 (QWEEIFHMTYDLAS) the chain is Cytoplasmic. Residues 414-436 (AVVRIVNLIGMMLLLCHWDGCLQ) traverse the membrane as a helical segment. Residues 437 to 464 (FLVPMLQDFPDDCWVSINNMVNNSWGKQ) lie on the Extracellular side of the membrane. Residue Asn-458 is glycosylated (N-linked (GlcNAc...) asparagine). The segment at residues 465 to 486 (YSYALFKAMSHMLCIGYGRQAP) is an intramembrane region (pore-forming). The Extracellular segment spans residues 487–491 (VGMSD). A helical membrane pass occupies residues 492–517 (VWLTMLSMIVGATCYAMFIGHATALI). Residues 518–1203 (QSLDSSRRQY…PVRSKLPSNL (686 aa)) lie on the Cytoplasmic side of the membrane. Positions 559, 562, 564, and 566 each coordinate 3',5'-cyclic GMP. Positions 659, 660, 662, 669, 670, 673, and 710 each coordinate 3',5'-cyclic AMP. Disordered stretches follow at residues 836-856 (ALGS…SSSS), 870-897 (GLSP…TPSA), and 918-1203 (LSSS…PSNL). 2 stretches are compositionally biased toward low complexity: residues 918 to 941 (LSSS…AAQP) and 966 to 986 (RSPS…SLGL). Over residues 995–1004 (ETPPRQPEPP) the composition is skewed to pro residues. Over residues 1005–1028 (SLVAGASGGASPVGFTPRGGLSPP) the composition is skewed to low complexity. Positions 1029-1042 (GHSPGPPRTFPSAP) are enriched in pro residues. Residues 1045–1056 (ASGSHGSLLLPP) are compositionally biased toward low complexity. A phosphoserine mark is found at Ser-1105 and Ser-1108. The segment covering 1122 to 1137 (AGGGSGGSGSSGGLGP) has biased composition (gly residues).

Belongs to the potassium channel HCN family. Homotetramer. The channel assemble into homotetramers or heteromeric complexes that contains of four pore-forming subunits. Interacts with PEX5L with a 4:4 HCN4:PEX5L stoichiometry; reduces the effects of cAMP on the voltage-dependence and rate of activation. Interacts with IRAG1; regulates HCN4 channel activity. Interacts with IRAG2; regulates HCN4 channel activity. S-palmitoylated. As to expression, highly expressed in thalamus, testis and in heart, both in ventricle and atrium. Detected at much lower levels in amygdala, substantia nigra, cerebellum and hippocampus.

Its subcellular location is the cell membrane. The enzyme catalyses K(+)(in) = K(+)(out). It carries out the reaction Na(+)(in) = Na(+)(out). With respect to regulation, activated by cAMP and to a lesser extent by cGMP and cCMP. cAMP binding causes a conformation change that leads to the assembly of an active tetramer and channel opening. Binding of cAMP removes a tonic inhibition conferred by cyclic nucleotide-binding domain (CNBD) on channel opening. Cyclic dinucleotides can modulate HCN4 channel; cyclic dinucleotides acting as potent antagonists of cAMP. Inhibited by extracellular Cs(+) ions. Auxiliary subunits can also regulate HCN4 channel. IRAG1 causes a gain-of-function by shifting HCN4 activation to more depolarized membrane potentials in the absence of cAMP. In contrast, IRAG2 causes a loss-of-function by inhibiting cAMP-dependent potentiation of HCN4 activation. Its function is as follows. Hyperpolarization-activated ion channel that are permeable to Na(+) and K(+) ions with very slow activation and inactivation. Exhibits higher selectivity for K(+) over Na(+) ions. Contributes to the native pacemaker currents in heart (If) that regulate the rhythm of heart beat. Contributes to the native pacemaker currents in neurons (Ih). May mediate responses to sour stimuli. The polypeptide is Potassium/sodium hyperpolarization-activated cyclic nucleotide-gated channel 4 (Homo sapiens (Human)).